Here is a 91-residue protein sequence, read N- to C-terminus: NADH-ubiquinone oxidoreductase chain 4L (91 aa).

Transmembrane regions (helical) follow at residues 2 to 22 (LIMILIFLIALLGLGLSQTHL) and 38 to 58 (LGLGMVSISGLHYPLMIALVL).

The protein belongs to the complex I subunit 4L family.

The protein localises to the mitochondrion membrane. The enzyme catalyses a ubiquinone + NADH + 5 H(+)(in) = a ubiquinol + NAD(+) + 4 H(+)(out). Its function is as follows. Core subunit of the mitochondrial membrane respiratory chain NADH dehydrogenase (Complex I) that is believed to belong to the minimal assembly required for catalysis. Complex I functions in the transfer of electrons from NADH to the respiratory chain. The immediate electron acceptor for the enzyme is believed to be ubiquinone. The chain is NADH-ubiquinone oxidoreductase chain 4L (ND4L) from Branchiostoma floridae (Florida lancelet).